The primary structure comprises 294 residues: 33 kDa chaperonin (294 aa).

2 cysteine pairs are disulfide-bonded: Cys-238–Cys-240 and Cys-271–Cys-274.

Belongs to the HSP33 family. Post-translationally, under oxidizing conditions two disulfide bonds are formed involving the reactive cysteines. Under reducing conditions zinc is bound to the reactive cysteines and the protein is inactive.

The protein localises to the cytoplasm. Redox regulated molecular chaperone. Protects both thermally unfolding and oxidatively damaged proteins from irreversible aggregation. Plays an important role in the bacterial defense system toward oxidative stress. This chain is 33 kDa chaperonin, found in Thermoanaerobacter pseudethanolicus (strain ATCC 33223 / 39E) (Clostridium thermohydrosulfuricum).